A 663-amino-acid polypeptide reads, in one-letter code: Spore germination protein GerIA (663 aa).

Over residues 1–13 the composition is skewed to basic residues; sequence MIWNWLRKKKKSN. Residues 1 to 175 are disordered; sequence MIWNWLRKKK…SGGNSIYDFT (175 aa). Over residues 47-56 the composition is skewed to basic and acidic residues; it reads KNNEQKDSSQ. Low complexity-rich tracts occupy residues 57-72, 88-101, and 122-150; these read DKQQ…QDKQ and PKQG…QQSA. Transmembrane regions (helical) follow at residues 414 to 434, 451 to 471, 491 to 511, 541 to 561, and 578 to 598; these read IFVD…DFFI, ILRL…VAVL, AQVP…IDLL, AGLT…ASFI, and FLAF…IFLF.

The protein belongs to the GerABKA family.

It is found in the cell membrane. Functionally, required for inosine germination. The protein is Spore germination protein GerIA (gerIA) of Bacillus cereus.